The following is a 160-amino-acid chain: Transcription elongation factor GreB (160 aa).

The protein belongs to the GreA/GreB family. GreB subfamily.

Its function is as follows. Necessary for efficient RNA polymerase transcription elongation past template-encoded arresting sites. The arresting sites in DNA have the property of trapping a certain fraction of elongating RNA polymerases that pass through, resulting in locked ternary complexes. Cleavage of the nascent transcript by cleavage factors such as GreA or GreB allows the resumption of elongation from the new 3'terminus. GreB releases sequences of up to 9 nucleotides in length. This chain is Transcription elongation factor GreB, found in Vibrio vulnificus (strain CMCP6).